Reading from the N-terminus, the 114-residue chain is Probable divalent-cation tolerance protein cutA homolog (114 aa).

This sequence belongs to the CutA family. Homotrimer.

The chain is Probable divalent-cation tolerance protein cutA homolog from Encephalitozoon cuniculi (strain GB-M1) (Microsporidian parasite).